We begin with the raw amino-acid sequence, 461 residues long: Diaboline synthase (461 aa).

Active-site proton acceptor residues include His-185 and Asp-400.

Belongs to the plant acyltransferase family. Monomer.

Its subcellular location is the cytoplasm. It catalyses the reaction 17,18-epoxy-17-hydroxycur-19-ene + acetyl-CoA = diaboline + CoA. It participates in alkaloid biosynthesis. In terms of biological role, acetyltransferase involved in the biosynthesis of curare monoterpene indole alkaloids (MIAs), natural products such as diaboline, a pharmacologically active compound used to regulate blood pressure. Curare alkaloids act as animal glycine receptor antagonists. Catalyzes the conversion of 17,18-epoxy-17-hydroxycur-19-ene (Wieland-Gumlich aldehyde) to diaboline. This Strychnos sp protein is Diaboline synthase.